The chain runs to 208 residues: Ras-related protein Rab-6A (208 aa).

At serine 2 the chain carries N-acetylserine. GTP-binding residues include serine 23, valine 24, glycine 25, lysine 26, threonine 27, serine 28, aspartate 39, asparagine 40, tyrosine 42, and threonine 45. Residue threonine 27 coordinates Mg(2+). The Switch 1 motif lies at 32 to 50; the sequence is RFMYDSFDNTYQATIGIDF. Mg(2+)-binding residues include threonine 45 and aspartate 68. Positions 69–88 match the Switch 2 motif; sequence TAGQERFRSLIPSYIRDSTV. Glycine 71 contributes to the GTP binding site. An O-AMP-tyrosine; by Legionella DrrA modification is found at tyrosine 82. Positions 126, 127, 129, 156, 157, and 158 each coordinate GTP. Serine 184 is modified (phosphoserine). 2 S-geranylgeranyl cysteine lipidation sites follow: cysteine 206 and cysteine 208. Cysteine methyl ester is present on cysteine 208.

This sequence belongs to the small GTPase superfamily. Rab family. As to quaternary structure, interacts (GTP-bound) with DYNLRB1; the interaction is direct. Interacts with BICD1. Interacts with BICD2; the interaction is direct. Interacts (GTP-bound) with VPS13B. Interacts with BICD1. Interacts (GDP-bound) with DYNLRB1; the interaction is direct. Interacts (GTP-bound) with VPS13B. In terms of assembly, interacts with BICDL1; leads to its accumulation in the pericentrosomal region. Interacts with SCYL1BP1. Interacts with VSP52. Interacts with RABGAP1. Interacts with GCC2 (via its GRIP domain). Interacts with RAB6IP1 (via its RUN 1 domain). Interacts with TMF1. Interacts with CIMAP3. Interacts (GTP-bound) with APBA1/MINT1 isoform 2, also called Mint1_826, but not with isoform 1. Interacts with RIC1; the interaction is direct with a preference for RAB6A-GDP. Interacts with RGP1; the interaction is direct with a preference for RAB6A-GDP. As to quaternary structure, (Microbial infection) Interacts with human cytomegalovirus protein UL32. It depends on Mg(2+) as a cofactor. Post-translationally, prenylated. In terms of tissue distribution, ubiquitous.

The protein localises to the golgi apparatus membrane. Its subcellular location is the cytoplasmic vesicle. It localises to the secretory vesicle. It is found in the acrosome membrane. The catalysed reaction is GTP + H2O = GDP + phosphate + H(+). With respect to regulation, regulated by guanine nucleotide exchange factors (GEFs) which promote the exchange of bound GDP for free GTP. Regulated by GTPase activating proteins (GAPs) which increase the GTP hydrolysis activity. Inhibited by GDP dissociation inhibitors (GDIs). In terms of biological role, the small GTPases Rab are key regulators of intracellular membrane trafficking, from the formation of transport vesicles to their fusion with membranes. Rabs cycle between an inactive GDP-bound form and an active GTP-bound form that is able to recruit to membranes different sets of downstream effectors directly responsible for vesicle formation, movement, tethering and fusion. RAB6A acts as a regulator of COPI-independent retrograde transport from the Golgi apparatus towards the endoplasmic reticulum (ER). Has a low GTPase activity. Recruits VPS13B to the Golgi membrane. Plays a role in neuron projection development. The sequence is that of Ras-related protein Rab-6A from Homo sapiens (Human).